A 250-amino-acid chain; its full sequence is DNA repair protein RecO (250 aa).

This sequence belongs to the RecO family.

Its function is as follows. Involved in DNA repair and RecF pathway recombination. The protein is DNA repair protein RecO of Rhodospirillum centenum (strain ATCC 51521 / SW).